The sequence spans 109 residues: Cell division protein ZapA (109 aa).

A coiled-coil region spans residues 21 to 99; that stretch reads PEQQEALNQA…IEQALLEQGK (79 aa).

This sequence belongs to the ZapA family. Type 1 subfamily. As to quaternary structure, homodimer. Interacts with FtsZ.

It is found in the cytoplasm. Activator of cell division through the inhibition of FtsZ GTPase activity, therefore promoting FtsZ assembly into bundles of protofilaments necessary for the formation of the division Z ring. It is recruited early at mid-cell but it is not essential for cell division. In Pectobacterium atrosepticum (strain SCRI 1043 / ATCC BAA-672) (Erwinia carotovora subsp. atroseptica), this protein is Cell division protein ZapA.